A 234-amino-acid chain; its full sequence is Proteasome subunit alpha type-2 (234 aa).

It belongs to the peptidase T1A family. As to quaternary structure, the 26S proteasome consists of a 20S proteasome core and two 19S regulatory subunits. The 20S proteasome core is composed of 28 subunits that are arranged in four stacked rings, resulting in a barrel-shaped structure. The two end rings are each formed by seven alpha subunits, and the two central rings are each formed by seven beta subunits. The catalytic chamber with the active sites is on the inside of the barrel. Interacts with Rpn6.

It is found in the cytoplasm. The protein resides in the nucleus. Its function is as follows. The proteasome is a multicatalytic proteinase complex which is characterized by its ability to cleave peptides with Arg, Phe, Tyr, Leu, and Glu adjacent to the leaving group at neutral or slightly basic pH. The proteasome has an ATP-dependent proteolytic activity. This is Proteasome subunit alpha type-2 (Prosalpha2) from Drosophila melanogaster (Fruit fly).